The sequence spans 364 residues: UDP-N-acetylglucosamine--N-acetylmuramyl-(pentapeptide) pyrophosphoryl-undecaprenol N-acetylglucosamine transferase (364 aa).

UDP-N-acetyl-alpha-D-glucosamine is bound by residues 10 to 12 (TGG), asparagine 124, arginine 165, serine 193, isoleucine 248, and glutamine 293.

This sequence belongs to the glycosyltransferase 28 family. MurG subfamily.

The protein resides in the cell inner membrane. It carries out the reaction di-trans,octa-cis-undecaprenyl diphospho-N-acetyl-alpha-D-muramoyl-L-alanyl-D-glutamyl-meso-2,6-diaminopimeloyl-D-alanyl-D-alanine + UDP-N-acetyl-alpha-D-glucosamine = di-trans,octa-cis-undecaprenyl diphospho-[N-acetyl-alpha-D-glucosaminyl-(1-&gt;4)]-N-acetyl-alpha-D-muramoyl-L-alanyl-D-glutamyl-meso-2,6-diaminopimeloyl-D-alanyl-D-alanine + UDP + H(+). Its pathway is cell wall biogenesis; peptidoglycan biosynthesis. In terms of biological role, cell wall formation. Catalyzes the transfer of a GlcNAc subunit on undecaprenyl-pyrophosphoryl-MurNAc-pentapeptide (lipid intermediate I) to form undecaprenyl-pyrophosphoryl-MurNAc-(pentapeptide)GlcNAc (lipid intermediate II). This Geobacter sulfurreducens (strain ATCC 51573 / DSM 12127 / PCA) protein is UDP-N-acetylglucosamine--N-acetylmuramyl-(pentapeptide) pyrophosphoryl-undecaprenol N-acetylglucosamine transferase.